Consider the following 492-residue polypeptide: Cytochrome P450 2A2 (492 aa).

Cys437 provides a ligand contact to heme.

It belongs to the cytochrome P450 family. Heme is required as a cofactor. As to expression, liver specific.

The protein localises to the endoplasmic reticulum membrane. Its subcellular location is the microsome membrane. The catalysed reaction is an organic molecule + reduced [NADPH--hemoprotein reductase] + O2 = an alcohol + oxidized [NADPH--hemoprotein reductase] + H2O + H(+). Highly active in the 15-alpha-hydroxylation of testosterone. The polypeptide is Cytochrome P450 2A2 (Cyp2a2) (Rattus norvegicus (Rat)).